Consider the following 204-residue polypeptide: Phosphoribosyl-dephospho-CoA transferase (204 aa).

Active-site residues include Asp129 and Asp131.

It belongs to the MdcG family.

The catalysed reaction is apo-[malonate decarboxylase ACP] + 2'-(5''-triphospho-alpha-D-ribosyl)-3'-dephospho-CoA = holo-[malonate decarboxylase ACP] + diphosphate. In terms of biological role, transfers 2'-(5-triphosphoribosyl)-3'-dephosphocoenzyme-A to the apo-[acyl-carrier-protein] of the malonate decarboxylase to yield holo-[acyl-carrier-protein]. The sequence is that of Phosphoribosyl-dephospho-CoA transferase from Pseudomonas putida (strain W619).